A 55-amino-acid chain; its full sequence is UPF0434 protein Erum1340/ERWE_CDS_01300 (55 aa).

This sequence belongs to the UPF0434 family.

The polypeptide is UPF0434 protein Erum1340/ERWE_CDS_01300 (Ehrlichia ruminantium (strain Welgevonden)).